A 332-amino-acid chain; its full sequence is MLLLAAASLVAFVLLLYMVSPLISPKPLALPGAHVVVTGGSSGIGKCIAIECYKQGAFITLVARNEDKLLQAKKEIEKHSINDKQVVLCISVDVSQDYSQVENVIKQAQEKLGPVDMLVNCAGMSLSGKFEDLEVSTFERLMSINYLGSVYPSRAVIATMKERRMGRVVFVSSQAGQLGLFGYTAYSSSKFALRGLAEALQMEVKPYNVYVTVAYPPDTDTPGFAKENQTKPLETRLISETTSVCKPEQVAKQIVKDAVQGNFNSSIGSDGYMLSSLTCGMAPVTSIMEGLQQVVTMGLFRTIALFYLGSFDSIVRRCMMQKAKLETVDKTA.

Positions 1–25 (MLLLAAASLVAFVLLLYMVSPLISP) are cleaved as a signal peptide. The Cytoplasmic segment spans residues 26 to 269 (KPLALPGAHV…QGNFNSSIGS (244 aa)). The NADPH site is built by Gly-39, Ser-41, Ser-42, Gly-43, Arg-64, Lys-68, and Asp-93. The GXSXG signature appears at 39-43 (GGSSG). Residue Ser-172 is the Proton donor of the active site. Tyr-186 serves as the catalytic Proton acceptor. The NADP(+) site is built by Tyr-186 and Lys-190. Catalysis depends on Lys-190, which acts as the Lowers pKa of active site Tyr. Residues 270–290 (DGYMLSSLTCGMAPVTSIMEG) form a helical membrane-spanning segment. At 291-292 (LQ) the chain is on the lumenal side. The helical transmembrane segment at 293–313 (QVVTMGLFRTIALFYLGSFDS) threads the bilayer. Topologically, residues 314–331 (IVRRCMMQKAKLETVDKT) are cytoplasmic.

This sequence belongs to the short-chain dehydrogenases/reductases (SDR) family.

It is found in the endoplasmic reticulum membrane. The catalysed reaction is sphinganine + NADP(+) = 3-oxosphinganine + NADPH + H(+). It participates in lipid metabolism; sphingolipid metabolism. Functionally, catalyzes the reduction of 3'-oxosphinganine (3-ketodihydrosphingosine/KDS) to sphinganine (dihydrosphingosine/DHS), the second step of de novo sphingolipid biosynthesis. This Bos taurus (Bovine) protein is 3-ketodihydrosphingosine reductase (KDSR).